The primary structure comprises 291 residues: Phytanoyl-CoA dioxygenase domain-containing protein 1 (291 aa).

2-oxoglutarate-binding positions include lysine 102, methionine 141, 156-158 (HQD), and tryptophan 174. Fe cation contacts are provided by histidine 156 and aspartate 158. Fe cation is bound at residue histidine 246. Residues serine 248 and arginine 257 each contribute to the 2-oxoglutarate site.

This sequence belongs to the PhyH family. PHYHD1 subfamily. The cofactor is Fe cation.

Its function is as follows. 2-oxoglutarate(2OG)-dependent dioxygenase that catalyzes the conversion of 2-oxoglutarate to succinate and CO(2) in an iron-dependent manner. However, does not couple 2OG turnover to the hydroxylation of acyl-coenzyme A derivatives, implying that it is not directly involved in phytanoyl coenzyme-A metabolism. Does not show detectable activity towards fatty acid CoA thioesters. The polypeptide is Phytanoyl-CoA dioxygenase domain-containing protein 1 (phyhd1) (Danio rerio (Zebrafish)).